Reading from the N-terminus, the 508-residue chain is Photosystem II CP47 reaction center protein (508 aa).

Helical transmembrane passes span 21-36 (SVHI…WAGS), 101-115 (IVFS…IWHW), 140-156 (GIHL…FGAF), 203-218 (IAAG…FHLS), 237-252 (VLSS…AFVV), and 457-472 (SFAL…HGAR).

This sequence belongs to the PsbB/PsbC family. PsbB subfamily. PSII is composed of 1 copy each of membrane proteins PsbA, PsbB, PsbC, PsbD, PsbE, PsbF, PsbH, PsbI, PsbJ, PsbK, PsbL, PsbM, PsbT, PsbX, PsbY, PsbZ, Psb30/Ycf12, at least 3 peripheral proteins of the oxygen-evolving complex and a large number of cofactors. It forms dimeric complexes. It depends on Binds multiple chlorophylls. PSII binds additional chlorophylls, carotenoids and specific lipids. as a cofactor.

The protein localises to the plastid. It localises to the chloroplast thylakoid membrane. One of the components of the core complex of photosystem II (PSII). It binds chlorophyll and helps catalyze the primary light-induced photochemical processes of PSII. PSII is a light-driven water:plastoquinone oxidoreductase, using light energy to abstract electrons from H(2)O, generating O(2) and a proton gradient subsequently used for ATP formation. This chain is Photosystem II CP47 reaction center protein, found in Aethionema cordifolium (Lebanon stonecress).